Here is a 403-residue protein sequence, read N- to C-terminus: Para-nitrophenol 4-monooxygenase (403 aa).

Residues 6 to 35 (GVVVVGGGPVGLLTALKLGKAGIKVVVLEA) and 279 to 289 (FRRGRVVLAGD) each bind FAD.

This sequence belongs to the PheA/TfdB FAD monooxygenase family. As to quaternary structure, monomer. Requires FAD as cofactor.

It carries out the reaction 4-nitrophenol + NADPH + O2 + H(+) = 1,4-benzoquinone + nitrite + NADP(+) + H2O. It participates in xenobiotic degradation; 4-nitrophenol degradation. Its function is as follows. Involved in the degradation of para-nitrophenol (4-NP). Catalyzes oxidation of 4-nitrophenol (4-NP) at position 4 with concomitant removal of the nitro group as nitrite and production of para-benzoquinone. The chain is Para-nitrophenol 4-monooxygenase (pnpA) from Pseudomonas sp. (strain WBC-3).